The chain runs to 481 residues: Innexin inx6 (481 aa).

The Cytoplasmic portion of the chain corresponds to 1 to 21 (MYAAVKPLSNYLRLKTVRIYD). A helical transmembrane segment spans residues 22–42 (PIFTLHSKCTIVILLTCTFLL). Residues 43–144 (SAKQYFGEPI…VTKRMYLRYY (102 aa)) lie on the Extracellular side of the membrane. The chain crosses the membrane as a helical span at residues 145-165 (QWVFMILLFQSLLFYFPSFLW). Over 166-220 (KVWEGQRMEQLCCEVGDALIVEATYRTRLQMLTRYFRAQFAPIHWCYSIKYAFCE) the chain is Cytoplasmic. The chain crosses the membrane as a helical span at residues 221–241 (LLNVFISILNFWLMDVVFNGF). Residues 242–302 (WYKYIHALAA…VLPLNILNEK (61 aa)) lie on the Extracellular side of the membrane. A helical membrane pass occupies residues 303 to 323 (IFAVLYVWFLFIALLAIMNIL). Over 324–481 (YRLLVICCPE…MDRFFHESHA (158 aa)) the chain is Cytoplasmic.

This sequence belongs to the pannexin family. As to expression, uniform expression in the imaginal wing disk. Expressed in an outer layer of the pupal developing CNS. Also expressed in pupal retina: cone cells and primary pigment cells.

The protein resides in the cell membrane. It is found in the cell junction. It localises to the gap junction. Structural components of the gap junctions. The chain is Innexin inx6 (Inx6) from Drosophila melanogaster (Fruit fly).